Consider the following 512-residue polypeptide: MFAFSKGPAGSSTYDRVAQKFQDGYEKMRAAIEMDELTKHAGSIQEKLRTAELYKEARSLLKEANEFNIMDIPETRRSEIRDKRQNMMKLEKSAQDRLIAICNEVDPNVKQSRSATVGPSRPASAARVTPRPTRATAPEKKNAAKAKENDENRHVCSRGDRCGAHHQPVTKKSDTVHPEPPVQASNRKMETVKRVKVDKASLPMHQNPVNRAALLNGVDKVIGERLLDEVLDNTGVRMDDVAGCHSAKAALEEAVILPALNPNLFKGLRQPVKGILLFGPPGNGKTLLAKAVAGESKQMFFNISASSLTSKWVGDSEKTIRGLFQIARNAQPSIIFIDEIDSILCERSEKDAEVSRRMKTEFLVQFDGATSSADDRILVIGATNRPHELDDAVLRRFPKRIMLNLPDEEARKELITKTLKKHNMMDGLISSDIRYIASNTSGFSNSDLVALCKEAAMVPIREIDRSKLSMTDGEKIRKIRASDFDTALRTIRPSTSQKIMSKLSDFSRSFGC.

At 1–274 (MFAFSKGPAG…FKGLRQPVKG (274 aa)) the chain is on the cytoplasmic side. A coiled-coil region spans residues 32-97 (IEMDELTKHA…MKLEKSAQDR (66 aa)). The segment at 110 to 182 (KQSRSATVGP…SDTVHPEPPV (73 aa)) is disordered. Residues 115–233 (ATVGPSRPAS…ERLLDEVLDN (119 aa)) form an MTBD region. Residues 137-163 (APEKKNAAKAKENDENRHVCSRGDRCG) are compositionally biased toward basic and acidic residues. The helical intramembrane region spans 275-294 (ILLFGPPGNGKTLLAKAVAG). 279-286 (GPPGNGKT) is an ATP binding site. The Cytoplasmic segment spans residues 295–512 (ESKQMFFNIS…LSDFSRSFGC (218 aa)).

It belongs to the AAA ATPase family. Spastin subfamily. Homohexamer. The homohexamer is stabilized by ATP-binding. The homohexamer may adopt a ring conformation through which microtubules pass prior to being severed. Interacts with microtubules. Interacts (via N-terminus) with tubulin; the interaction is direct.

It localises to the membrane. It is found in the cytoplasm. Its subcellular location is the cytoskeleton. The protein resides in the perinuclear region. It carries out the reaction n ATP + n H2O + a microtubule = n ADP + n phosphate + (n+1) alpha/beta tubulin heterodimers.. Its function is as follows. ATP-dependent microtubule severing protein that specifically recognizes and cuts microtubules. Probably by regulating microtubule remodeling, plays a role in new synapse formation in GABAergic DD (Dorsal D type) neurons. This chain is Spastin homolog, found in Caenorhabditis elegans.